The following is a 149-amino-acid chain: Probable glycine-rich RNA-binding protein 1 (149 aa).

An RRM domain is found at 8–83; sequence YRCFVGGLAW…LDGRNITAQA (76 aa). The interval 80–149 is disordered; it reads TAQARGSGTR…GRSEGGSWRN (70 aa). Gly residues-rich tracts occupy residues 87–101, 110–123, and 131–143; these read GTRG…SGGY, YNRG…GGYG, and YGDG…GRSE.

The protein belongs to the GR-RBP family.

Its function is as follows. Possibly has a role in RNA transcription or processing during stress. In Arabidopsis thaliana (Mouse-ear cress), this protein is Probable glycine-rich RNA-binding protein 1 (RBG1).